Reading from the N-terminus, the 602-residue chain is Cholinesterase (602 aa).

Residues 1–28 (MQSKGTIISIQFLLRFLLLWVLIGKSHT) form the signal peptide. The N-linked (GlcNAc...) asparagine glycan is linked to asparagine 85. Cysteine 93 and cysteine 120 are oxidised to a cystine. An N-linked (GlcNAc...) asparagine glycan is attached at asparagine 134. 144–145 (GG) contributes to the substrate binding site. The active-site Acyl-ester intermediate is the serine 226. Serine 226 carries the post-translational modification Phosphoserine. Asparagine 269 and asparagine 284 each carry an N-linked (GlcNAc...) asparagine glycan. Cysteine 280 and cysteine 291 form a disulfide bridge. The Charge relay system role is filled by glutamate 353. Asparagine 369 is a glycosylation site (N-linked (GlcNAc...) asparagine). A disulfide bridge connects residues cysteine 428 and cysteine 547. The active-site Charge relay system is histidine 466. N-linked (GlcNAc...) asparagine glycans are attached at residues asparagine 483, asparagine 509, asparagine 513, and asparagine 514.

The protein belongs to the type-B carboxylesterase/lipase family. As to quaternary structure, homotetramer; disulfide-linked. Dimer of dimers.

Its subcellular location is the secreted. It catalyses the reaction an acylcholine + H2O = a carboxylate + choline + H(+). Its function is as follows. Esterase with broad substrate specificity. Contributes to the inactivation of the neurotransmitter acetylcholine. Can degrade neurotoxic organophosphate esters. This Felis catus (Cat) protein is Cholinesterase (BCHE).